The sequence spans 556 residues: Potassium-transporting ATPase potassium-binding subunit (556 aa).

Helical transmembrane passes span 6 to 26 (AGLI…VPLG), 65 to 85 (GVLA…LVQG), 133 to 153 (GLAV…VALV), 176 to 196 (LRIL…GGAI), 249 to 269 (PTAW…FSLP), 283 to 303 (YAIA…MLWF), 378 to 398 (GLYG…LMVG), 419 to 439 (YFLV…ALPG), 483 to 503 (ALGL…LALA), and 526 to 546 (FVGM…LPML).

The protein belongs to the KdpA family. In terms of assembly, the system is composed of three essential subunits: KdpA, KdpB and KdpC.

The protein localises to the cell membrane. Functionally, part of the high-affinity ATP-driven potassium transport (or Kdp) system, which catalyzes the hydrolysis of ATP coupled with the electrogenic transport of potassium into the cytoplasm. This subunit binds the extracellular potassium ions and delivers the ions to the membrane domain of KdpB through an intramembrane tunnel. This chain is Potassium-transporting ATPase potassium-binding subunit, found in Mycobacterium avium (strain 104).